A 120-amino-acid chain; its full sequence is Large ribosomal subunit protein uL18 (120 aa).

This sequence belongs to the universal ribosomal protein uL18 family. As to quaternary structure, part of the 50S ribosomal subunit; part of the 5S rRNA/L5/L18/L25 subcomplex. Contacts the 5S and 23S rRNAs.

This is one of the proteins that bind and probably mediate the attachment of the 5S RNA into the large ribosomal subunit, where it forms part of the central protuberance. In Brucella anthropi (strain ATCC 49188 / DSM 6882 / CCUG 24695 / JCM 21032 / LMG 3331 / NBRC 15819 / NCTC 12168 / Alc 37) (Ochrobactrum anthropi), this protein is Large ribosomal subunit protein uL18.